The following is a 444-amino-acid chain: UDP-N-acetylmuramate--L-alanine ligase (444 aa).

110–116 (GAHGKTS) lines the ATP pocket.

This sequence belongs to the MurCDEF family.

It is found in the cytoplasm. The enzyme catalyses UDP-N-acetyl-alpha-D-muramate + L-alanine + ATP = UDP-N-acetyl-alpha-D-muramoyl-L-alanine + ADP + phosphate + H(+). Its pathway is cell wall biogenesis; peptidoglycan biosynthesis. In terms of biological role, cell wall formation. This chain is UDP-N-acetylmuramate--L-alanine ligase, found in Streptococcus pneumoniae (strain JJA).